Consider the following 41-residue polypeptide: Large ribosomal subunit protein bL36 (41 aa).

This sequence belongs to the bacterial ribosomal protein bL36 family.

The protein is Large ribosomal subunit protein bL36 of Phenylobacterium zucineum (strain HLK1).